The chain runs to 297 residues: Bifunctional protein FolD 2 (297 aa).

Residues 164–166, S193, and I234 each bind NADP(+); that span reads GRS.

The protein belongs to the tetrahydrofolate dehydrogenase/cyclohydrolase family. As to quaternary structure, homodimer.

The enzyme catalyses (6R)-5,10-methylene-5,6,7,8-tetrahydrofolate + NADP(+) = (6R)-5,10-methenyltetrahydrofolate + NADPH. The catalysed reaction is (6R)-5,10-methenyltetrahydrofolate + H2O = (6R)-10-formyltetrahydrofolate + H(+). Its pathway is one-carbon metabolism; tetrahydrofolate interconversion. Its function is as follows. Catalyzes the oxidation of 5,10-methylenetetrahydrofolate to 5,10-methenyltetrahydrofolate and then the hydrolysis of 5,10-methenyltetrahydrofolate to 10-formyltetrahydrofolate. The sequence is that of Bifunctional protein FolD 2 from Haloarcula marismortui (strain ATCC 43049 / DSM 3752 / JCM 8966 / VKM B-1809) (Halobacterium marismortui).